The primary structure comprises 571 residues: Chondroitin sulfate proteoglycan 5 (571 aa).

The first 30 residues, 1–30, serve as a signal peptide directing secretion; the sequence is MGRAGGGGPGWGPPPVLLLLGVTLVLTAGA. At 31 to 428 the chain is on the extracellular side; that stretch reads VPAREAGSAI…SIITDFQVMC (398 aa). Residue serine 38 is glycosylated (O-linked (Xyl...) (chondroitin sulfate) serine). Asparagine 57 carries N-linked (GlcNAc...) asparagine glycosylation. The segment at 57-91 is disordered; it reads NDTREEAGLPAAGEDETSWTERGSELAAVGPGVGP. Residue threonine 76 is glycosylated (O-linked (GalNAc...) threonine). The O-linked (Xyl...) (chondroitin sulfate) serine glycan is linked to serine 123. O-linked (GalNAc...) threonine glycosylation is present at threonine 132. Disordered regions lie at residues 137-169, 186-254, and 279-357; these read DEAL…KPSL, GGST…TPSW, and DDLE…DLAT. Serine 143 carries an O-linked (GalNAc...) serine glycan. 2 O-linked (GalNAc...) threonine glycosylation sites follow: threonine 144 and threonine 153. O-linked (GalNAc...) serine glycosylation is found at serine 156 and serine 160. Residues threonine 162 and threonine 198 are each glycosylated (O-linked (GalNAc...) threonine). Residues 214-223 are compositionally biased toward acidic residues; it reads IDIDYFEGLD. Residue threonine 240 is glycosylated (O-linked (GalNAc...) threonine). Residues 270–306 are interaction with TNC and TNR; that stretch reads DFYPTTSFYDDLEEEEEEEEDKDAVGGGDLEDESDLL. The span at 279–291 shows a compositional bias: acidic residues; sequence DDLEEEEEEEEDK. O-linked (GalNAc...) threonine glycosylation is found at threonine 318 and threonine 322. A glycan (N-linked (GlcNAc...) asparagine) is linked at asparagine 372. An EGF-like domain is found at 376–418; that stretch reads RSVCDLFPSYCHNGGQCYLVENIGAFCRCNTQDYIWHKGMRCE. 3 cysteine pairs are disulfide-bonded: cysteine 379/cysteine 392, cysteine 386/cysteine 402, and cysteine 404/cysteine 417. A helical transmembrane segment spans residues 429–449; that stretch reads VAVGSAALVLLLLFMMTVFFA. The segment at 447-465 is interaction with GOPC; sequence FFAKKLYLLKTENTKLRRT. The Cytoplasmic portion of the chain corresponds to 450-571; the sequence is KKLYLLKTEN…EVNCLQNNLT (122 aa). Serine 472, serine 480, serine 488, and serine 548 each carry phosphoserine. The interval 538-563 is disordered; sequence EESFNIQNSMSPKLEGGKGDQDDLEV.

In terms of assembly, interacts with ERBB3 and GOPC. Binds TNR and probably TNC. Interacts with MDK; this interaction is independent of the presence of chondroitin sulfate chains and promotes elongation of oligodendroglial precursor-like cells. Post-translationally, N-glycosylated. In terms of processing, O-glycosylated; contains chondroitin sulfate glycans. Part-time proteoglycan, expressed in part as a proteoglycan exhibiting chondroitin sulfate glycans and in part as a non-proteoglycan form. The relative amount of both forms depends on tissues and tissue maturation. Phosphorylated; in intracellular and extracellular parts. In terms of tissue distribution, expressed in cerebral cortex and cerebellum. Expressed in retina (at protein level).

It is found in the cell membrane. Its subcellular location is the synaptic cell membrane. It localises to the endoplasmic reticulum membrane. The protein localises to the golgi apparatus membrane. The protein resides in the cell surface. It is found in the secreted. In terms of biological role, may function as a growth and differentiation factor involved in neuritogenesis. May induce ERBB3 activation. This is Chondroitin sulfate proteoglycan 5 (Cspg5) from Rattus norvegicus (Rat).